The following is a 469-amino-acid chain: ATP synthase subunit beta (469 aa).

Residue 156–163 (GGAGVGKT) coordinates ATP.

Belongs to the ATPase alpha/beta chains family. As to quaternary structure, F-type ATPases have 2 components, CF(1) - the catalytic core - and CF(0) - the membrane proton channel. CF(1) has five subunits: alpha(3), beta(3), gamma(1), delta(1), epsilon(1). CF(0) has three main subunits: a(1), b(2) and c(9-12). The alpha and beta chains form an alternating ring which encloses part of the gamma chain. CF(1) is attached to CF(0) by a central stalk formed by the gamma and epsilon chains, while a peripheral stalk is formed by the delta and b chains.

The protein resides in the cell membrane. The enzyme catalyses ATP + H2O + 4 H(+)(in) = ADP + phosphate + 5 H(+)(out). Produces ATP from ADP in the presence of a proton gradient across the membrane. The catalytic sites are hosted primarily by the beta subunits. The sequence is that of ATP synthase subunit beta from Lactococcus lactis subsp. cremoris (strain SK11).